A 704-amino-acid polypeptide reads, in one-letter code: Penicillin-binding protein H (704 aa).

Residues 23-43 form a helical membrane-spanning segment; that stretch reads FFLAVFVLFTALIFKLGVVQI. Residues 197–223 are disordered; that stretch reads MNPNKSNSNGKNGALLDEKKNSSQRPK. A compositionally biased stretch (low complexity) spans 200 to 209; it reads NKSNSNGKNG. The span at 212–223 shows a compositional bias: basic and acidic residues; it reads LDEKKNSSQRPK. The active-site Acyl-ester intermediate is Ser-415.

It belongs to the transpeptidase family.

It localises to the cell membrane. The catalysed reaction is Preferential cleavage: (Ac)2-L-Lys-D-Ala-|-D-Ala. Also transpeptidation of peptidyl-alanyl moieties that are N-acyl substituents of D-alanine.. It participates in cell wall biogenesis; peptidoglycan biosynthesis. Involved in the polymerization of peptidoglycan. Plays a redundant role with PBP-2A (pbpA) in determining the rod shape of the cell during vegetative growth and spore outgrowth. The polypeptide is Penicillin-binding protein H (Bacillus subtilis (strain 168)).